A 513-amino-acid polypeptide reads, in one-letter code: Na(+)/H(+) antiporter NhaB (513 aa).

12 helical membrane-spanning segments follow: residues 23–43 (LALIIFLIVNPLIFLISPFVA), 52–72 (IFTLAMALKCYPLLPGGLLAI), 97–117 (LLLMFMVAGIYFMKQLLLFIF), 120–140 (LLLSIRSKMLLSLSFCVAAAF), 144–164 (FLDALTVVAVVISVAVGFYGI), 202–222 (LMMHAGVGTALGGVMTMVGEP), 238–258 (FFLRMSPVTVPVLICGLLTCL), 303–323 (AIIGVWLVTALALHLAEVGLI), 348–368 (TESLPFTALLTVFFSVVAVII), 391–411 (LFYIFNGLLSSISDNVFVGTI), 447–467 (ATPNGQAAFLFLLTSALAPLI), and 475–495 (VWMALPYTLVLTLVGLLCVEF).

This sequence belongs to the NhaB Na(+)/H(+) (TC 2.A.34) antiporter family.

The protein resides in the cell inner membrane. The enzyme catalyses 2 Na(+)(in) + 3 H(+)(out) = 2 Na(+)(out) + 3 H(+)(in). Na(+)/H(+) antiporter that extrudes sodium in exchange for external protons. This chain is Na(+)/H(+) antiporter NhaB, found in Escherichia coli (strain 55989 / EAEC).